A 488-amino-acid polypeptide reads, in one-letter code: MTKNNETGWNLDNSYTTLPQSFYTEIPPTPVSSPELVKLNHSLAISLGLTPEELKKEAEIAIFAGNALPEGAHPLAQAYAGHQFGHFNMLGDGRALLIGEQITPSGERFDIQLKGSGPTPYSRRGDGRAALGPMLREYIISEAMYALDIPTTRSLAVVTTGEPTYRETKLPGAILTRVASSHIRVGTFQYAAARGSIEDLKSLADYTIKRHYPEIESHENQYTALLQEVIKRQASLIAKWQLVGFIHGVMNTDNITISGETIDYGPCAFMDNYDQGTVFSSIDTQGRYAYGNQPYMAAWDLARLAESLIPILHEDEEEALKIAQDEISKFSVQYEKQWFLGMKKKLGLFSNEEQAHSLIEQLLKMMEKYKADYTNTFRSLTLDAIENTALFESPEFKEWYKLWQSRLDRQEQSKENAYEMMKNNNPSIIPRNHRVEEALEAAVTNDDYSVMEKLLEALSNPYAYSTDQEEYCIPPAPTNRPYRTFCGT.

ATP-binding residues include Gly-91, Gly-93, Arg-94, Lys-114, Asp-126, Gly-127, Arg-177, and Arg-184. Asp-253 acts as the Proton acceptor in catalysis. Mg(2+)-binding residues include Asn-254 and Asp-263. Residue Asp-263 participates in ATP binding.

Belongs to the SELO family. Requires Mg(2+) as cofactor. The cofactor is Mn(2+).

It carries out the reaction L-seryl-[protein] + ATP = 3-O-(5'-adenylyl)-L-seryl-[protein] + diphosphate. The catalysed reaction is L-threonyl-[protein] + ATP = 3-O-(5'-adenylyl)-L-threonyl-[protein] + diphosphate. It catalyses the reaction L-tyrosyl-[protein] + ATP = O-(5'-adenylyl)-L-tyrosyl-[protein] + diphosphate. The enzyme catalyses L-histidyl-[protein] + UTP = N(tele)-(5'-uridylyl)-L-histidyl-[protein] + diphosphate. It carries out the reaction L-seryl-[protein] + UTP = O-(5'-uridylyl)-L-seryl-[protein] + diphosphate. The catalysed reaction is L-tyrosyl-[protein] + UTP = O-(5'-uridylyl)-L-tyrosyl-[protein] + diphosphate. In terms of biological role, nucleotidyltransferase involved in the post-translational modification of proteins. It can catalyze the addition of adenosine monophosphate (AMP) or uridine monophosphate (UMP) to a protein, resulting in modifications known as AMPylation and UMPylation. The chain is Protein nucleotidyltransferase YdiU from Bacillus cereus (strain B4264).